The primary structure comprises 518 residues: Retinal dehydrogenase 2 (518 aa).

Residue Y168 is modified to Phosphotyrosine. NAD(+) is bound by residues 184–186 (IPW), 210–213 (KPAE), and 264–266 (STE). E286 acts as the Proton acceptor in catalysis. C320 serves as the catalytic Nucleophile. S351 carries the post-translational modification Phosphoserine. Residues 366–370 (KQYNK) and E417 contribute to the NAD(+) site.

Belongs to the aldehyde dehydrogenase family. In terms of assembly, homotetramer. In terms of tissue distribution, found in testis and less abundantly in lung, brain, heart, liver and kidney.

The protein resides in the cytoplasm. The enzyme catalyses retinal + NAD(+) + H2O = retinoate + NADH + 2 H(+). The catalysed reaction is all-trans-retinal + NAD(+) + H2O = all-trans-retinoate + NADH + 2 H(+). It catalyses the reaction all-trans-13,14-dihydroretinal + NAD(+) + H2O = all-trans-13,14-dihydroretinoate + NADH + 2 H(+). It participates in cofactor metabolism; retinol metabolism. In terms of biological role, catalyzes the NAD-dependent oxidation of aldehyde substrates, such as all-trans-retinal and all-trans-13,14-dihydroretinal, to their corresponding carboxylic acids, all-trans-retinoate and all-trans-13,14-dihydroretinoate, respectively. Retinoate signaling is critical for the transcriptional control of many genes, for instance it is crucial for initiation of meiosis in both male and female. Recognizes retinal as substrate, both in its free form and when bound to cellular retinol-binding protein. Lacks activity with benzaldehyde, acetaldehyde and octanal. Displays complete lack of activity with citral. The chain is Retinal dehydrogenase 2 (Aldh1a2) from Rattus norvegicus (Rat).